The primary structure comprises 485 residues: Glutamyl-tRNA(Gln) amidotransferase subunit A (485 aa).

Residues K79 and S154 each act as charge relay system in the active site. S178 serves as the catalytic Acyl-ester intermediate.

This sequence belongs to the amidase family. GatA subfamily. As to quaternary structure, heterotrimer of A, B and C subunits.

It carries out the reaction L-glutamyl-tRNA(Gln) + L-glutamine + ATP + H2O = L-glutaminyl-tRNA(Gln) + L-glutamate + ADP + phosphate + H(+). In terms of biological role, allows the formation of correctly charged Gln-tRNA(Gln) through the transamidation of misacylated Glu-tRNA(Gln) in organisms which lack glutaminyl-tRNA synthetase. The reaction takes place in the presence of glutamine and ATP through an activated gamma-phospho-Glu-tRNA(Gln). The sequence is that of Glutamyl-tRNA(Gln) amidotransferase subunit A from Staphylococcus saprophyticus subsp. saprophyticus (strain ATCC 15305 / DSM 20229 / NCIMB 8711 / NCTC 7292 / S-41).